The following is a 655-amino-acid chain: MASTDYSTYSQAAAQQGYSAYTAQPTQGYAQTTQAYGQQSYGTYGQPTDVSYTQAQTTATYGQTAYATSYGQPPTGYSTPTAPQAYSQPVQGYGTGTYDSTTATVTTTQASYAAQTAYGTQPAYPTYGQQPTATAPTRPQDGNKPAETSQPQSSTGGYNQPSLGYGQSNYSYPQVPGSYPMQPVTAPPSYPPTSYSSSQPTSYDQSSYSQQNTYGQPSSYGQQSSYGQQSSYGQQPPTSYPPQTGSYSQAPSQYSQQSSSYGQQSSFRQDHPSSMGVYGQESGGFSGPGENRSLSGPDNRGRGRGGFDRGGMSRGGRGGGRGGLGAGERGGFNKPGGPMDEGPDLDLGLPIDPDEDSDNSAIYVQGLNDNVTLDDLADFFKQCGVVKMNKRTGQPMIHIYLDKETGKPKGDATVSYEDPPTAKAAVEWFDGKDFQGSKLKVSLARKKPPMNSMRGGMPPREGRGMPPPLRGGPGGPGGPGGPMGRMGGRGGDRGGFPPRGPRGSRGNPSGGGNVQHRAGDWQCPNPGCGNQNFAWRTECNQCKAPKPEGFLPPPFPPPGGDRGRGGPGGMRGGRGGLMDRGGPGGMFRGGRGGDRGGFRGGRGMDRGGFGGGRRGGPGGPPGPLMEQMGGRRGGRGGPGKMDKGEHRQERRDRPY.

The segment at 1 to 285 (MASTDYSTYS…GVYGQESGGF (285 aa)) is EAD (Gln/Pro/Thr-rich). 31 consecutive repeat copies span residues 8–16 (TYSQAAAQQ), 17–27 (GYSAYTAQPTQ), 28–34 (GYAQTTQ), 35–42 (AYGQQSYG), 43–50 (TYGQPTDV), 51–59 (SYTQAQTTA), 60–68 (TYGQTAYAT), 69–75 (SYGQPPT), 76–84 (GYSTPTAPQ), 85–91 (AYSQPVQ), 92–110 (GYGT…TTQA), 111–116 (SYAAQT), 117–125 (AYGTQPAYP), 126–156 (TYGQ…SSTG), 157–163 (GYNQPSL), 164–170 (GYGQSNY), 171–177 (SYPQVPG), 178–188 (SYPMQPVTAPP), 189–193 (SYPPT), 194–201 (SYSSSQPT), 202–206 (SYDQS), 207–212 (SYSQQN), 213–218 (TYGQPS), 219–224 (SYGQQS), 225–230 (SYGQQS), 231–238 (SYGQQPPT), 239–245 (SYPPQTG), 246–252 (SYSQAPS), 253–259 (QYSQQSS), 260–276 (SYGQ…SSMG), and 277–285 (VYGQESGGF). The 31 X approximate tandem repeats stretch occupies residues 8-285 (TYSQAAAQQG…GVYGQESGGF (278 aa)). A disordered region spans residues 121–350 (QPAYPTYGQQ…EGPDLDLGLP (230 aa)). Polar residues-rich tracts occupy residues 127-137 (YGQQPTATAPT) and 146-172 (AETS…NYSY). The span at 192-266 (PTSYSSSQPT…QSSSYGQQSS (75 aa)) shows a compositional bias: low complexity. The IQ domain occupies 256-285 (QQSSSYGQQSSFRQDHPSSMGVYGQESGGF). Ser266 bears the Phosphoserine; by PKC mark. 7 positions are modified to asymmetric dimethylarginine: Arg300, Arg302, Arg304, Arg309, Arg314, Arg317, and Arg321. The span at 308-334 (DRGGMSRGGRGGGRGGLGAGERGGFNK) shows a compositional bias: gly residues. A compositionally biased stretch (low complexity) spans 335 to 350 (PGGPMDEGPDLDLGLP). The 87-residue stretch at 360–446 (SAIYVQGLND…SKLKVSLARK (87 aa)) folds into the RRM domain. An N6-acetyllysine modification is found at Lys438. 2 disordered regions span residues 447-524 (KPPM…WQCP) and 544-655 (APKP…DRPY). An asymmetric dimethylarginine mark is found at Arg454 and Arg463. Arg470 carries the asymmetric dimethylarginine; alternate modification. The residue at position 470 (Arg470) is an Omega-N-methylarginine; alternate. Over residues 471 to 489 (GGPGGPGGPGGPMGRMGGR) the composition is skewed to gly residues. The residue at position 485 (Arg485) is an Omega-N-methylarginine. Arg489 carries the post-translational modification Asymmetric dimethylarginine; by PRMT8. 3 positions are modified to asymmetric dimethylarginine: Arg493, Arg499, and Arg502. Arg505 bears the Asymmetric dimethylarginine; alternate mark. Arg505 carries the omega-N-methylarginine; alternate modification. Residues 517 to 548 (RAGDWQCPNPGCGNQNFAWRTECNQCKAPKPE) form a RanBP2-type zinc finger. Pro residues predominate over residues 550–559 (FLPPPFPPPG). Asymmetric dimethylarginine is present on residues Arg562 and Arg564. A compositionally biased stretch (gly residues) spans 565 to 590 (GGPGGMRGGRGGLMDRGGPGGMFRGG). An Asymmetric dimethylarginine; alternate; by PRMT8 modification is found at Arg571. Arg571 carries the omega-N-methylarginine; alternate; by PRMT8 modification. Arg574, Arg580, Arg588, and Arg591 each carry asymmetric dimethylarginine. A compositionally biased stretch (basic and acidic residues) spans 591–605 (RGGDRGGFRGGRGMD). Asymmetric dimethylarginine; alternate; by PRMT8 is present on Arg595. The residue at position 595 (Arg595) is an Omega-N-methylarginine; alternate; by PRMT8. Arg599 is modified (asymmetric dimethylarginine). An Asymmetric dimethylarginine; by PRMT8 modification is found at Arg602. Asymmetric dimethylarginine; alternate; by PRMT8 is present on Arg606. The residue at position 606 (Arg606) is an Omega-N-methylarginine; alternate; by PRMT8. Over residues 606–617 (RGGFGGGRRGGP) the composition is skewed to gly residues. Arg614 carries the post-translational modification Asymmetric dimethylarginine; alternate. Arg614 is modified (omega-N-methylarginine; alternate). Residues Arg632 and Arg635 each carry the asymmetric dimethylarginine modification. Positions 638 to 655 (PGKMDKGEHRQERRDRPY) match the Nuclear localization signal motif. The span at 640-655 (KMDKGEHRQERRDRPY) shows a compositional bias: basic and acidic residues.

Belongs to the RRM TET family. As to quaternary structure, binds RNA, POLR2C, SF1 and calmodulin. Interacts with PTK2B and TDRD3. Forms a complex with REC8, PRDM9, SYCP3 and SYCP1; complex formation is dependent of phosphorylated form of REC8 and requires PRDM9 bound to hotspot DNA; EWSR1 joins PRDM9 with the chromosomal axis through REC8. In terms of processing, phosphorylated; calmodulin-binding inhibits phosphorylation of Ser-266. Highly methylated on arginine residues. Methylation is mediated by PRMT1 and, at lower level by PRMT8.

The protein localises to the nucleus. It is found in the cytoplasm. The protein resides in the cell membrane. In terms of biological role, binds to ssRNA containing the consensus sequence 5'-AGGUAA-3'. Might function as a transcriptional repressor. The sequence is that of RNA-binding protein EWS (Ewsr1) from Mus musculus (Mouse).